The following is a 1503-amino-acid chain: Rho GTPase-activating protein 5 (1503 aa).

4 FF domains span residues 267–325, 366–420, 427–481, and 482–548; these read QLVV…HIEQ, KLME…HVQH, RIEM…HQRE, and IVEK…HIGF. Y550 bears the 3'-nitrotyrosine mark. Residues S590 and S765 each carry the phosphoserine modification. The pG1 pseudoGTPase domain occupies 590–763; it reads STNIDKVNLF…LESVKHNLDV (174 aa). Residues 779–944 enclose the pG2 pseudoGTPase domain; the sequence is RIVMCAMCGD…FSDVLEKKNM (166 aa). 2 positions are modified to phosphoserine: S951 and S968. 3 disordered regions span residues 975–1004, 1022–1050, and 1069–1091; these read YNNY…LPTP, HSTP…PKTN, and NPRK…SDNY. Positions 1036-1045 are enriched in pro residues; that stretch reads VPPPIKPKPV. S1115 bears the Phosphoserine mark. Disordered regions lie at residues 1129–1157 and 1169–1255; these read NTQG…YKYK and YRRT…TRRN. The span at 1141 to 1151 shows a compositional bias: basic and acidic residues; it reads RTSKGHGERRP. Phosphoserine is present on residues S1196, S1203, and S1219. Residues 1263–1450 enclose the Rho-GAP domain; the sequence is MPLQDLVTAE…TFIQQCQFFF (188 aa).

May interact with RASA1/p120GAP. In terms of tissue distribution, expressed in spinal cord, cerebellum, kidney, testis and lung.

Its subcellular location is the cytoplasm. It localises to the cell membrane. GTPase-activating protein for Rho family members. This chain is Rho GTPase-activating protein 5 (Arhgap5), found in Mus musculus (Mouse).